The chain runs to 149 residues: Protein FAM72A (149 aa).

The protein belongs to the FAM72 family. As to quaternary structure, interacts with UNG. In terms of tissue distribution, expressed at high levels in stomach and also in kidney and, at low levels, in heart (at protein level). In the stomach, highly expressed in foveolar cells, parietal cells and chief cells (at protein level). In kidney, expressed in endothelial cells, mesangial and epithelial cells (parietal and visceral epithelium) around glomerulus (at protein level).

The protein localises to the cytoplasm. Its subcellular location is the mitochondrion. In terms of biological role, may play a role in the regulation of cellular reactive oxygen species metabolism. May participate in cell growth regulation. The polypeptide is Protein FAM72A (Fam72a) (Rattus norvegicus (Rat)).